The chain runs to 268 residues: MEMO1 family protein Ta0237 (268 aa).

The protein belongs to the MEMO1 family.

The polypeptide is MEMO1 family protein Ta0237 (Thermoplasma acidophilum (strain ATCC 25905 / DSM 1728 / JCM 9062 / NBRC 15155 / AMRC-C165)).